Consider the following 281-residue polypeptide: Nuclear transcription factor Y subunit nfya-2 (281 aa).

Disordered regions lie at residues 1–27 (MNPRGNPSKMPTQIVLNRRPAAPARPQ) and 163–261 (REMR…VQEE). The Subunit association domain (SAD) motif lies at 150-173 (MVNPRQYKRIIKRREMRQKMEDSG). Basic and acidic residues predominate over residues 166–188 (RQKMEDSGRLPLERQKYMHESRR). A DNA-binding region (NFYA/HAP2-type) is located at residues 180–204 (QKYMHESRRQHALKRRRTGGRFDAN). Residues 189–198 (QHALKRRRTG) show a composition bias toward basic residues. The segment covering 204 to 220 (NAEAAAASSEPSISSAA) has biased composition (low complexity).

This sequence belongs to the NFYA/HAP2 subunit family. In terms of assembly, forms a heterotrimeric transcription factor complex (nfya-2-NF-Y complex) composed of nfya-2, nfyb-1 and nfyc-1. Interacts with the nfyb-1 and nfyc-1 dimer; the interaction is required for subsequent binding to the 5'-CCAAT-3' box motif in DNA. Does not interact with either nfyb-1 or nfyc-1 in their monomeric form. In terms of tissue distribution, highly expressed in certain parts of the gonads. Expressed in the spermatheca, intestine and in some neurons in the head. Not expressed in the intestine, the hypodermis, body wall muscle surrounding the pseudocoelomic space, secretory cells in the pharyngeal terminal bulb wall, in the small ganglia surrounding the pharynx and in the neurons running anteriorly to the sensory organs in the head.

The protein localises to the nucleus. Its function is as follows. Component of the sequence-specific heterotrimeric transcription factor (nfya-2-NF-Y) which specifically recognizes a 5'-CCAAT-3' box motif found in the promoters of its target genes to regulate their expression and control cellular identity in particular tissue types. In association with the components in the nfya-2-NF-Y complex, may repress the expression of the T-box transcription factor tbx-2 throughout larval development, which most likely restricts its expression to certain tissues. The polypeptide is Nuclear transcription factor Y subunit nfya-2 (Caenorhabditis elegans).